The chain runs to 519 residues: Mannuronan C5-epimerase (519 aa).

Residues 1–25 (MNLHPHLRHSLLASALLLASGLATA) form the signal peptide. PbH1 repeat units lie at residues 219 to 246 (GTET…SISQ), 281 to 303 (TQDF…DPHD), 305 to 328 (SHRL…IVSR), 330 to 352 (VNDS…VIDR), 354 to 376 (SVNN…TLYE), and 377 to 399 (SGDN…RVRN). Catalysis depends on H302, which acts as the Proton acceptor.

The protein belongs to the D-mannuronate C5-epimerase family.

The protein resides in the periplasm. It carries out the reaction [(1-&gt;4)-beta-D-mannuronosyl](n) = [alginate](n). The protein operates within glycan biosynthesis; alginate biosynthesis. Catalyzes the epimerization of beta-D-mannuronate to alpha-L-guluronate during the synthesis of the linear polysaccharide alginate. In addition, is part of a periplasmic protein complex that protects alginate from degradation by AlgL by channeling the newly formed alginate polymer through a scaffold that transfers the alginate polymer through the periplasmic space to the outer membrane secretin AlgE. The polypeptide is Mannuronan C5-epimerase (algG) (Pseudomonas putida (strain ATCC 47054 / DSM 6125 / CFBP 8728 / NCIMB 11950 / KT2440)).